The sequence spans 229 residues: Potassium/proton antiporter CemA (229 aa).

3 helical membrane passes run 7-27 (FTPL…SFSV), 107-127 (ILHF…SILG), and 189-209 (IISG…KYWI).

It belongs to the CemA family.

The protein resides in the plastid. Its subcellular location is the chloroplast inner membrane. The enzyme catalyses K(+)(in) + H(+)(out) = K(+)(out) + H(+)(in). Contributes to K(+)/H(+) antiport activity by supporting proton efflux to control proton extrusion and homeostasis in chloroplasts in a light-dependent manner to modulate photosynthesis. Prevents excessive induction of non-photochemical quenching (NPQ) under continuous-light conditions. Indirectly promotes efficient inorganic carbon uptake into chloroplasts. In Nicotiana sylvestris (Wood tobacco), this protein is Potassium/proton antiporter CemA.